The chain runs to 365 residues: Peptide chain release factor 2 (365 aa).

Gln251 bears the N5-methylglutamine mark.

This sequence belongs to the prokaryotic/mitochondrial release factor family. In terms of processing, methylated by PrmC. Methylation increases the termination efficiency of RF2.

Its subcellular location is the cytoplasm. Peptide chain release factor 2 directs the termination of translation in response to the peptide chain termination codons UGA and UAA. The chain is Peptide chain release factor 2 from Campylobacter jejuni (strain RM1221).